Consider the following 101-residue polypeptide: uncharacterized protein (101 aa).

This is an uncharacterized protein from Haemophilus influenzae (strain ATCC 51907 / DSM 11121 / KW20 / Rd).